The following is a 221-amino-acid chain: MKKAVVLLSGGMDSAAVIAMAQEQGFAVHALSVRYGQRHTSELDAAARVAKAQGVVAHKIVDVDLRSIGGSALTDDIDVPEAGGAGIPVTYVPARNTIMLSLALGWAEVLGANDIFCGVNAVDYSGYPDCRPEFVAAFQALANLATKSGVEGAGIKVHAPLQFLSKGQIVSEGVRLGVDFGLTVSCYNADANGAACGHCDACRLRAQGFAEAGVPDPTLYA.

Leucine 8–isoleucine 18 contributes to the ATP binding site. Zn(2+) contacts are provided by cysteine 186, cysteine 196, cysteine 199, and cysteine 202.

Belongs to the QueC family. Zn(2+) is required as a cofactor.

The enzyme catalyses 7-carboxy-7-deazaguanine + NH4(+) + ATP = 7-cyano-7-deazaguanine + ADP + phosphate + H2O + H(+). The protein operates within purine metabolism; 7-cyano-7-deazaguanine biosynthesis. Its function is as follows. Catalyzes the ATP-dependent conversion of 7-carboxy-7-deazaguanine (CDG) to 7-cyano-7-deazaguanine (preQ(0)). In Stenotrophomonas maltophilia (strain K279a), this protein is 7-cyano-7-deazaguanine synthase.